The primary structure comprises 438 residues: Fibrous sheath-interacting protein 1 (438 aa).

Residues 1-111 are disordered; the sequence is MSMDIIKGNL…PEHSDDPKLE (111 aa). Low complexity predominate over residues 18-32; it reads SSSRSRPGSRSSNGS. Residues 53–72 are compositionally biased toward basic and acidic residues; the sequence is SGKEGHTSDSRVEERRKISD. Phosphoserine is present on residues serine 71, serine 88, and serine 89. Positions 131–157 form a coiled coil; the sequence is LAKRRIREKEIKKQGLEMRIKLWEELK. Residues 354–390 are disordered; it reads SQSNKGDMEHDSNEERNTEPTPGEKILRDNKEQRDRE. Basic and acidic residues-rich tracts occupy residues 359–371 and 378–390; these read GDME…ERNT and KILR…RDRE.

This sequence belongs to the FSIP1 family.

This chain is Fibrous sheath-interacting protein 1 (Fsip1), found in Rattus norvegicus (Rat).